The chain runs to 473 residues: H(+)/Cl(-) exchange transporter ClcA (473 aa).

Residues 1 to 32 (MKTDNSTFLAQQIVRLRRRDQIRRLMQRDKTP) are Cytoplasmic-facing. Residues 33–69 (LAILFMAAVVGTLTGLVGVAFEKAVSWVQNMRIGALV) form a helical membrane-spanning segment. The Periplasmic segment spans residues 70 to 76 (QVADHAF). A helical membrane pass occupies residues 77–100 (LLWPLAFILSALLAMVGYFLVRKF). The short motif at 106 to 110 (GSGIP) is the Selectivity filter part_1 element. Ser-107 provides a ligand contact to chloride. The helical intramembrane region spans 109–116 (IPEIEGAL). Residues 117-123 (EELRPVR) are Cytoplasmic-facing. Transmembrane regions (helical) follow at residues 124 to 141 (WWRVLPVKFIGGMGTLGA) and 148 to 166 (EGPTVQIGGNLGRMVLDVF). The Selectivity filter part_2 motif lies at 146–150 (GREGP). Residues 167–176 (RMRSAEARHT) are Cytoplasmic-facing. 2 intramembrane regions (helical) span residues 177–189 (LLATGAAAGLSAA) and 193–201 (PLAGILFII). Over 202 to 214 (EEMRPQFRYNLIS) the chain is Cytoplasmic. Residues 215–232 (IKAVFTGVIMSSIVFRIF) form a helical membrane-spanning segment. Over 233–252 (NGEAPIIEVGKLSDAPVNTL) the chain is Periplasmic. The chain crosses the membrane as a helical span at residues 253-281 (WLYLILGIIFGCVGPVFNSLVLRTQDMFQ). The Cytoplasmic segment spans residues 282 to 287 (RFHGGE). The helical transmembrane segment at 288 to 309 (IKKWVLMGGAIGGLCGILGLIE) threads the bilayer. Residues 310–329 (PEAAGGGFNLIPIAAAGNFS) lie on the Periplasmic side of the membrane. Transmembrane regions (helical) follow at residues 330–349 (VGLLLFIFITRVVTTLLCFS) and 355–376 (GIFAPMLALGTLLGTAFGMAAA). Positions 355 to 359 (GIFAP) match the Selectivity filter part_3 motif. Residues Ile-356 and Phe-357 each coordinate chloride. Topologically, residues 377 to 386 (VLFPQYHLEA) are periplasmic. The helical intramembrane region spans 387–401 (GTFAIAGMGALMAAS). Residues 402 to 404 (VRA) constitute an intramembrane region (note=Loop between two helices). Positions 405–416 (PLTGIVLVLEMT) form an intramembrane region, helical. The segment at residues 417–421 (DNYQL) is an intramembrane region (note=Loop between two helices). The chain crosses the membrane as a helical span at residues 422–438 (ILPMIITCLGATLLAQF). Topologically, residues 439-473 (LGGKPLYSTILARTLAKQDAEQAAKNQNAPAGENT) are cytoplasmic. Tyr-445 provides a ligand contact to chloride.

The protein belongs to the chloride channel (TC 2.A.49) family. ClcA subfamily. In terms of assembly, homodimer.

It localises to the cell inner membrane. It catalyses the reaction 2 chloride(in) + H(+)(out) = 2 chloride(out) + H(+)(in). Its function is as follows. Proton-coupled chloride transporter. Functions as antiport system and exchanges two chloride ions for 1 proton. Probably acts as an electrical shunt for an outwardly-directed proton pump that is linked to amino acid decarboxylation, as part of the extreme acid resistance (XAR) response. The sequence is that of H(+)/Cl(-) exchange transporter ClcA from Salmonella schwarzengrund (strain CVM19633).